The sequence spans 177 residues: ADP-ribosylation factor-like protein 3 (177 aa).

The N-myristoyl glycine moiety is linked to residue Gly2. GTP-binding positions include 23–31 (GLDNAGKTT), 125–128 (NKQD), and Ala159.

The protein belongs to the small GTPase superfamily. Arf family.

It localises to the golgi apparatus membrane. The protein localises to the cytoplasm. It is found in the cytoskeleton. Its subcellular location is the spindle. The protein resides in the nucleus. It localises to the microtubule organizing center. Its function is as follows. Small GTP-binding protein which cycles between an inactive GDP-bound and an active GTP-bound form, and the rate of cycling is regulated by guanine nucleotide exchange factors (GEF) and GTPase-activating proteins (GAP). Required for normal cytokinesis and cilia signaling. Required for targeting proteins to the ciliary membrane by releasing myristoylated protein from unc119 cargo adapters into the cilium. The protein is ADP-ribosylation factor-like protein 3 of Chlamydomonas reinhardtii (Chlamydomonas smithii).